The chain runs to 145 residues: Large-conductance mechanosensitive channel (145 aa).

Transmembrane regions (helical) follow at residues V14 to L34, L38 to P58, and G81 to V101.

Belongs to the MscL family. As to quaternary structure, homopentamer.

The protein localises to the cell inner membrane. Its function is as follows. Channel that opens in response to stretch forces in the membrane lipid bilayer. May participate in the regulation of osmotic pressure changes within the cell. This is Large-conductance mechanosensitive channel from Rhizobium leguminosarum bv. trifolii (strain WSM2304).